The sequence spans 312 residues: Ribosomal RNA small subunit methyltransferase H (312 aa).

S-adenosyl-L-methionine contacts are provided by residues 34–36 (AGH), Asp54, Phe81, Asp102, and Gln109.

Belongs to the methyltransferase superfamily. RsmH family.

The protein resides in the cytoplasm. The enzyme catalyses cytidine(1402) in 16S rRNA + S-adenosyl-L-methionine = N(4)-methylcytidine(1402) in 16S rRNA + S-adenosyl-L-homocysteine + H(+). Functionally, specifically methylates the N4 position of cytidine in position 1402 (C1402) of 16S rRNA. The chain is Ribosomal RNA small subunit methyltransferase H from Citrifermentans bemidjiense (strain ATCC BAA-1014 / DSM 16622 / JCM 12645 / Bem) (Geobacter bemidjiensis).